The sequence spans 467 residues: MENKGVITQIIGPVVDVTFENELPRIYNALKIDRGNGEYLVAEVQQHLGNSVVRAVAMDATDGLQRGMEVVDTGPAITVPVGKAVLGRILNVLGEPVDEAGEVKAEEYAPIHREAPAFEDQGTEKEVFETGIKVVDLLAPYVKGGKIGLFGGAGVGKTVLIMELINNIAQGHGGLSVFAGVGERTREGRDLYDEMLESGVLDKTSLVYGQMNEPPGARLRVGLTGLTMAENFRDKEGQDVLFFVDNIFRFTQAPSEVSALLGRMPSAVGYQPNLATDMGALQERITSTKTGSITSVQAVYVPADDLTDPAPATTFTHLDATTVLSRRIASLGIYPAVDPLDSTSTALEPQIIGHEHYNTAREVQQILQRYKELQDIIAILGMDELSDEDKVTVNRARKIERFFSQPFHVAEQFTGMDGKYVTVKETIRGFKEIIEGKHDDLPEQAFLYVGTIDEAIAKARELMKGAE.

Position 151-158 (151-158 (GGAGVGKT)) interacts with ATP.

Belongs to the ATPase alpha/beta chains family. As to quaternary structure, F-type ATPases have 2 components, CF(1) - the catalytic core - and CF(0) - the membrane proton channel. CF(1) has five subunits: alpha(3), beta(3), gamma(1), delta(1), epsilon(1). CF(0) has three main subunits: a, b and c.

Its subcellular location is the cell membrane. The catalysed reaction is 4 Na(+)(in) + ATP + H2O = 4 Na(+)(out) + ADP + phosphate + H(+). Produces ATP from ADP in the presence of a sodium ion gradient across the membrane. The beta chain is the catalytic subunit. This is ATP synthase subunit beta, sodium ion specific from Propionigenium modestum.